Consider the following 199-residue polypeptide: Ribonuclease HII (199 aa).

Residues 7–196 (PWVCGVDEAG…VRELMANEKD (190 aa)) enclose the RNase H type-2 domain. 3 residues coordinate a divalent metal cation: Asp-13, Glu-14, and Asp-105.

Belongs to the RNase HII family. Mn(2+) serves as cofactor. Requires Mg(2+) as cofactor.

The protein localises to the cytoplasm. It carries out the reaction Endonucleolytic cleavage to 5'-phosphomonoester.. In terms of biological role, endonuclease that specifically degrades the RNA of RNA-DNA hybrids. The protein is Ribonuclease HII of Nitrosospira multiformis (strain ATCC 25196 / NCIMB 11849 / C 71).